The chain runs to 497 residues: Serine/arginine-rich protein PSR (497 aa).

The first 19 residues, 1 to 19 (MYSRCIALVFVGLLASSLA), serve as a signal peptide directing secretion. The Extracellular segment spans residues 20–366 (ANCYGPAGKL…HHGLSSQKLG (347 aa)). N-linked (GlcNAc...) asparagine glycosylation is found at Asn92, Asn193, Asn202, Asn261, and Asn283. A helical transmembrane segment spans residues 367-387 (LAIGLPIAGVFLIILIAAAII). At 388–497 (YYRKRRESEK…ESASRDSDSD (110 aa)) the chain is on the cytoplasmic side. Positions 424–450 (MGSKTMQAMLDMRDDDESEHDSDDGYG) are necessary for phosphorylation by PSRPK in vitro. Over residues 436–447 (RDDDESEHDSDD) the composition is skewed to acidic residues. Residues 436-497 (RDDDESEHDS…ESASRDSDSD (62 aa)) form a disordered region. The segment covering 459 to 471 (GRSRSRSRSRSVS) has biased composition (basic residues). Residues 476–497 (GSRDARSESDPGESASRDSDSD) are compositionally biased toward basic and acidic residues.

In terms of processing, phosphorylated on serine residues in the RS domain by PSRPK.

Its subcellular location is the membrane. In Physarum polycephalum (Slime mold), this protein is Serine/arginine-rich protein PSR.